The primary structure comprises 1265 residues: Protein transport protein SEC31 (1265 aa).

WD repeat units lie at residues 6-46 (EIAR…ELWD), 61-105 (TVDN…KTKD), 116-156 (KHTG…EPFA), 162-202 (TPMD…EVLH), 209-252 (GGRA…APEK), 256-296 (GHKK…KLGE), and 299-339 (TTAN…PSVS). One copy of the WD 8; interaction with SEC13 repeat lies at 380–403 (SFGFGSKLVIINTDSSGKSTVKVD). Over residues 457–480 (KESLFEDANNDEKEATSPETKKEN) the composition is skewed to basic and acidic residues. 3 disordered regions span residues 457 to 485 (KESL…EDDF), 765 to 784 (VKSS…GQTR), and 793 to 1163 (PAYA…IPEN). Positions 794-810 (AYAPPVQAPPVQAPQPP) are enriched in pro residues. 5 stretches are compositionally biased toward low complexity: residues 811-824 (LVQQ…QQQP), 865-875 (TPSSLSGTTSG), 901-931 (AKTA…FGSP), 939-951 (SQPG…SSAG), and 969-987 (SISR…TVPA). Residues 1004-1023 (SDASQPPSSGFASPTLNSSP) are compositionally biased toward polar residues. 2 stretches are compositionally biased toward pro residues: residues 1062-1071 (YAPPKNPYAV) and 1083-1101 (APPP…PPQP).

This sequence belongs to the WD repeat SEC31 family. The COPII coat is composed of at least 5 proteins: the SEC23/24 complex, the SEC13/31 complex, and the protein SAR1. SEC13 and SEC31 make a 2:2 tetramer that forms the edge element of the COPII outer coat. The tetramer self-assembles in multiple copies to form the complete polyhedral cage. Interacts (via WD 8) with SEC13.

It localises to the cytoplasmic vesicle. It is found in the COPII-coated vesicle membrane. The protein resides in the endoplasmic reticulum membrane. Functionally, component of the coat protein complex II (COPII) which promotes the formation of transport vesicles from the endoplasmic reticulum (ER). The coat has two main functions, the physical deformation of the endoplasmic reticulum membrane into vesicles and the selection of cargo molecules. The polypeptide is Protein transport protein SEC31 (PGA63) (Candida albicans (strain SC5314 / ATCC MYA-2876) (Yeast)).